The chain runs to 552 residues: NADH-ubiquinone oxidoreductase chain 5 (552 aa).

The next 15 membrane-spanning stretches (helical) occupy residues 11 to 31, 36 to 56, 68 to 88, 89 to 109, 121 to 141, 152 to 172, 196 to 216, 229 to 249, 256 to 274, 287 to 307, 322 to 342, 365 to 386, 406 to 426, 453 to 473, and 532 to 552; these read PVTI…PFGL, LAMT…AYAI, FYII…SDNY, LMMF…ISFW, SAIL…GLMI, IALV…LLLL, TPVS…YVLV, LLII…IAIV, VIAL…AIGI, HAFF…SFVA, LPFS…IPGL, ILYY…RVLY, SLGM…IGYS, AYIK…LVYV, and SRAV…LFFI.

The protein belongs to the complex I subunit 5 family.

The protein resides in the mitochondrion inner membrane. The enzyme catalyses a ubiquinone + NADH + 5 H(+)(in) = a ubiquinol + NAD(+) + 4 H(+)(out). Its function is as follows. Core subunit of the mitochondrial membrane respiratory chain NADH dehydrogenase (Complex I) that is believed to belong to the minimal assembly required for catalysis. Complex I functions in the transfer of electrons from NADH to the respiratory chain. The immediate electron acceptor for the enzyme is believed to be ubiquinone. This Candida albicans (strain SC5314 / ATCC MYA-2876) (Yeast) protein is NADH-ubiquinone oxidoreductase chain 5 (NAD5).